Here is a 79-residue protein sequence, read N- to C-terminus: Conotoxin ArMSGL-0123 (79 aa).

A signal peptide spans 1–20; it reads MSRLGIMVLTLLLLVFIVTS. Residues 21–44 constitute a propeptide that is removed on maturation; sequence HQDAGEKQATKRAAVNFRWRRSFT. Disulfide bonds link Cys-52–Cys-64, Cys-56–Cys-73, and Cys-63–Cys-77. At Leu-78 the chain carries Leucine amide.

It belongs to the conotoxin O3 superfamily. Expressed by the venom duct.

The protein resides in the secreted. This is Conotoxin ArMSGL-0123 from Conus arenatus (Sand-dusted cone).